Consider the following 398-residue polypeptide: MKIDPVELTRKLISFESITPEDSGAIEYIATIFKKSGFDCEILEFGDKVKNLYAKYINGVPNLCFAGHVDVVPPGQLKDWAFGPFKPEVRDGMLYGRGAADMKSGVAAFIAAMVNLIAEKFQFNGSISALITSAEESMEEYGTKAVLEWMKNKQKKIDFCVVGEPTSSEKLGDTIKIGRRGSVTFELICHGKQGHVAYPDLADNPIYKVISILSKVKNTTFDHGNKYFQPSHCEVTTIDVGNNTSNLIPGSATTRFNIRYNNEQTPGGLYKLIDEICSSVTNDYKLSMHSSRDVFLSTPDRNTDIMLDAISKVTNIDAILSTSGGTSDAAFIKDVCPVIEFGIINKTAHQINECVSVNDIHKLTAIYKEFIENYFNPTNKILNQVNVVSNISSGPLLA.

His-68 is a Zn(2+) binding site. Residue Asp-70 is part of the active site. Residue Asp-101 participates in Zn(2+) binding. Glu-135 serves as the catalytic Proton acceptor. Glu-136, Glu-164, and His-349 together coordinate Zn(2+).

Belongs to the peptidase M20A family. DapE subfamily. As to quaternary structure, homodimer. It depends on Zn(2+) as a cofactor. Co(2+) serves as cofactor.

It catalyses the reaction N-succinyl-(2S,6S)-2,6-diaminopimelate + H2O = (2S,6S)-2,6-diaminopimelate + succinate. The protein operates within amino-acid biosynthesis; L-lysine biosynthesis via DAP pathway; LL-2,6-diaminopimelate from (S)-tetrahydrodipicolinate (succinylase route): step 3/3. Functionally, catalyzes the hydrolysis of N-succinyl-L,L-diaminopimelic acid (SDAP), forming succinate and LL-2,6-diaminopimelate (DAP), an intermediate involved in the bacterial biosynthesis of lysine and meso-diaminopimelic acid, an essential component of bacterial cell walls. The chain is Succinyl-diaminopimelate desuccinylase from Wolbachia pipientis wMel.